The primary structure comprises 287 residues: MLARFPLYLRLVRMDKPIGSLLLLWPTLNALWIASDGHPRWPLIVIFALGTLLMRSAGCAMNDYADRDFDRHVKRTADRPLTSGKIRAWEAVAIAVGLSFVAFLLILPLNTLTKELSVVALFVAGTYPFMKRFFAIPQAYLGIAFGFGIPMAFAAVQNTVPPLAWVMLIANVFWSIAYDTEYAMVDRDDDIKIGIRTSALTFGRFDVAAVMACYAVTLGIYVWIGIALGFGAAYWVGWAAAAGCAVYHYTLIKGRERMPCFAAFRHNNWLGGVLFAGIAAHYLMAGS.

6 consecutive transmembrane segments (helical) span residues 41-61 (WPLI…GCAM), 89-109 (WEAV…ILPL), 133-153 (FFAI…PMAF), 158-178 (NTVP…SIAY), 218-238 (LGIY…WVGW), and 267-287 (NNWL…MAGS).

It belongs to the UbiA prenyltransferase family. The cofactor is Mg(2+).

The protein localises to the cell inner membrane. The enzyme catalyses all-trans-octaprenyl diphosphate + 4-hydroxybenzoate = 4-hydroxy-3-(all-trans-octaprenyl)benzoate + diphosphate. Its pathway is cofactor biosynthesis; ubiquinone biosynthesis. Its function is as follows. Catalyzes the prenylation of para-hydroxybenzoate (PHB) with an all-trans polyprenyl group. Mediates the second step in the final reaction sequence of ubiquinone-8 (UQ-8) biosynthesis, which is the condensation of the polyisoprenoid side chain with PHB, generating the first membrane-bound Q intermediate 3-octaprenyl-4-hydroxybenzoate. This is 4-hydroxybenzoate octaprenyltransferase from Burkholderia multivorans (strain ATCC 17616 / 249).